Reading from the N-terminus, the 569-residue chain is Tetratricopeptide repeat protein 22 (569 aa).

TPR repeat units follow at residues 66–99 (PAVR…HPGN), 101–133 (NAWA…MGLA), 203–237 (ATLY…LRQV), 260–294 (KDTF…AKNQ), 295–328 (PPIL…LRDP), 383–418 (FKAY…ALVF), and 432–465 (PELQ…DDAG).

The sequence is that of Tetratricopeptide repeat protein 22 (TTC22) from Homo sapiens (Human).